The following is a 229-amino-acid chain: Biosynthetic peptidoglycan transglycosylase (229 aa).

A helical membrane pass occupies residues 10–30 (LLLALVLVVLYQFWIFMHILW).

The protein belongs to the glycosyltransferase 51 family.

It is found in the cell inner membrane. The enzyme catalyses [GlcNAc-(1-&gt;4)-Mur2Ac(oyl-L-Ala-gamma-D-Glu-L-Lys-D-Ala-D-Ala)](n)-di-trans,octa-cis-undecaprenyl diphosphate + beta-D-GlcNAc-(1-&gt;4)-Mur2Ac(oyl-L-Ala-gamma-D-Glu-L-Lys-D-Ala-D-Ala)-di-trans,octa-cis-undecaprenyl diphosphate = [GlcNAc-(1-&gt;4)-Mur2Ac(oyl-L-Ala-gamma-D-Glu-L-Lys-D-Ala-D-Ala)](n+1)-di-trans,octa-cis-undecaprenyl diphosphate + di-trans,octa-cis-undecaprenyl diphosphate + H(+). Its pathway is cell wall biogenesis; peptidoglycan biosynthesis. Its function is as follows. Peptidoglycan polymerase that catalyzes glycan chain elongation from lipid-linked precursors. The sequence is that of Biosynthetic peptidoglycan transglycosylase from Methylobacillus flagellatus (strain ATCC 51484 / DSM 6875 / VKM B-1610 / KT).